The following is a 55-amino-acid chain: Large ribosomal subunit protein bL33 (55 aa).

It belongs to the bacterial ribosomal protein bL33 family.

This Methylacidiphilum infernorum (isolate V4) (Methylokorus infernorum (strain V4)) protein is Large ribosomal subunit protein bL33.